A 75-amino-acid polypeptide reads, in one-letter code: Porwaprin-d (75 aa).

The N-terminal stretch at 1-24 is a signal peptide; the sequence is MSSGGLLLLLGLLTLWAELTPVSS. The region spanning 27-72 is the WAP domain; sequence RPKKPGLCPPRPQKPPCVRECKNDWRCPGEQKCCRYGCIYECRDPI. Disulfide bonds link cysteine 34-cysteine 60, cysteine 43-cysteine 64, cysteine 47-cysteine 59, and cysteine 53-cysteine 68.

Belongs to the venom waprin family. As to expression, expressed by the venom gland.

It localises to the secreted. Functionally, damages membranes of susceptible bacteria. Has no hemolytic activity. Not toxic to mice. Does not inhibit the proteinases elastase and cathepsin G. The protein is Porwaprin-d of Pseudechis porphyriacus (Red-bellied black snake).